The following is a 493-amino-acid chain: MSFKDLRSFIDHLETNGELKRISHPVDPHLEMTEIADRVLRAKGPALLFENPVGNDMPVLANLFGTPKRVAMALGKEDPIALRDVGELLAFLKEPEPPSGFKDAIAKIPMFKQALNMPPKTVRNPPCQQVVKTGEEVDLTKLPIQHCWPGDVAPLVTWGLTITKGPRQKRQNLGIYRQQLLGKDKLIMRWLDHRGGALDFKDFKEKHPGERYPVVVALGADPVTILGAVTPVPDAMSEYAFAGLLRGERTEVCKALSCDLEVPATSEIILEGYIDPEEMAEEGPYGDHTGYYNETDSFPVFTVTHMTHRKDAIYHSTYTGRPPDEPAMLGVALNEVFVPILRKQYPEIIDFYLPPEGCSYRMAVISIRKQYPGHAKRVMMGAWSFLRQFMYTKFIVVVDEDVNCRDWNDVIWAITTRMDPKRDTVMIENTPIDYLDFASPVAGLGSKMGMDATNKWQGETDREWGTPIVMDEAVKQKVDAIWNDLGIDDAPTL.

Asn172 contacts Mn(2+). Residues 175–177 (IYR), 189–191 (RWL), and 194–195 (RG) each bind prenylated FMN. Residue Glu238 coordinates Mn(2+). The active-site Proton donor is the Asp287.

This sequence belongs to the UbiD family. Homohexamer. It depends on prenylated FMN as a cofactor. Mn(2+) is required as a cofactor.

Its subcellular location is the cell membrane. The catalysed reaction is a 4-hydroxy-3-(all-trans-polyprenyl)benzoate + H(+) = a 2-(all-trans-polyprenyl)phenol + CO2. The protein operates within cofactor biosynthesis; ubiquinone biosynthesis. Functionally, catalyzes the decarboxylation of 3-octaprenyl-4-hydroxy benzoate to 2-octaprenylphenol, an intermediate step in ubiquinone biosynthesis. The sequence is that of 3-octaprenyl-4-hydroxybenzoate carboxy-lyase from Shewanella halifaxensis (strain HAW-EB4).